A 367-amino-acid chain; its full sequence is Cytochrome-c peroxidase IdrP2 (367 aa).

The N-terminal stretch at 1–28 is a signal peptide; it reads MTTHQSIRRLSRIAALVGLAFVAGTVAA. 2 consecutive Cytochrome c domains span residues 47 to 157 and 200 to 345; these read DMVE…AMWQ and SQQK…EALS. 6 residues coordinate heme c: Cys69, Cys72, His73, Cys215, Cys218, and His219.

In terms of assembly, the iodate reductase (Idr) complex is composed of a molybdopterin-dependent iodate reductase (IdrA and IdrB subunits) and two associated peroxidases (IdrP1 and IdrP2). It depends on heme c as a cofactor.

It is found in the periplasm. It carries out the reaction 2 Fe(II)-[cytochrome c] + H2O2 + 2 H(+) = 2 Fe(III)-[cytochrome c] + 2 H2O. Involved in iodate respiration. May play a critical role in detoxification of inadvertent H(2)O(2) generated by the iodate reductase IdrA/IdrB. This is Cytochrome-c peroxidase IdrP2 from Denitromonas iodatirespirans.